A 464-amino-acid polypeptide reads, in one-letter code: Glycine receptor subunit alpha-3 (464 aa).

A signal peptide spans 1-33; the sequence is MAHVRHFRTLVSGFYFWEAALLLSLVATKETNS. Topologically, residues 34-255 are extracellular; that stretch reads ARSRSAPMSP…RFHLERQMGY (222 aa). The N-linked (GlcNAc...) asparagine glycan is linked to Asn-71. Cys-171 and Cys-185 are joined by a disulfide. Residues Glu-225 and Asp-227 each coordinate Zn(2+). An intrachain disulfide couples Cys-231 to Cys-242. Residue 235-240 participates in strychnine binding; sequence YNTGKF. His-248 contributes to the Zn(2+) binding site. The helical transmembrane segment at 256-277 threads the bilayer; that stretch reads YLIQMYIPSLLIVILSWVSFWI. At 278–282 the chain is on the cytoplasmic side; sequence NMDAA. The chain crosses the membrane as a helical span at residues 283 to 303; that stretch reads PARVALGITTVLTMTTQSSGS. Topologically, residues 304-314 are extracellular; it reads RASLPKVSYVK. Residues 315-335 form a helical membrane-spanning segment; the sequence is AIDIWMAVCLLFVFSALLEYA. The Cytoplasmic segment spans residues 336–430; the sequence is AVNFVSRQHK…FIDRAKKIDT (95 aa). Position 370 is a phosphoserine (Ser-370). Position 379 is a phosphoserine; by PKA (Ser-379). Residues 431 to 451 form a helical membrane-spanning segment; that stretch reads ISRACFPLAFLIFNIFYWVIY. The Extracellular segment spans residues 452-464; the sequence is KILRHEDIHQQQD.

The protein belongs to the ligand-gated ion channel (TC 1.A.9) family. Glycine receptor (TC 1.A.9.3) subfamily. GLRA3 sub-subfamily. As to quaternary structure, homopentamer (in vitro). Heteropentamer composed of GLRA3 and GLRB. Both homopentamers and heteropentamers form functional ion channels, but their characteristics are subtly different. Phosphorylated by PKA; this causes down-regulation of channel activity. Dephosphorylated in response to activation of HTR1A signaling; this increases channel activity. As to expression, detected in brainstem, also in neurons that control rhythmic breathing. Detected in superficial laminae of the dorsal horn of the thoracic spinal cord. Detected in dentate gyrus in hippocampus, especially in stratum granulare. Detected in the inner plexiform layer in the retina (at protein level). Detected in midbrain, thalamus, brain cortex, hippocampus, and at lower levels in cerebellum.

It localises to the postsynaptic cell membrane. The protein localises to the synapse. Its subcellular location is the perikaryon. It is found in the cell projection. The protein resides in the dendrite. It localises to the cell membrane. The enzyme catalyses chloride(in) = chloride(out). Its activity is regulated as follows. Inhibited by prostaglandin E2, probably via PKA-mediated phosphorylation at Ser-379. Glycine receptors are ligand-gated chloride channels. Channel opening is triggered by extracellular glycine. Channel characteristics depend on the subunit composition; heteropentameric channels display faster channel closure. Plays an important role in the down-regulation of neuronal excitability. Contributes to the generation of inhibitory postsynaptic currents. Contributes to increased pain perception in response to increased prostaglandin E2 levels. Plays a role in the regulation of breathing rhythm, especially of the duration of the postinspiratory phase. Plays a role in cellular responses to ethanol. The polypeptide is Glycine receptor subunit alpha-3 (Glra3) (Mus musculus (Mouse)).